Reading from the N-terminus, the 180-residue chain is Inner membrane-spanning protein YciB (180 aa).

5 helical membrane passes run 10–30 (IIAF…GVLM), 47–67 (ITTR…VTLL), 74–94 (IKMK…GGLI), 121–141 (YAWI…AEFW), and 151–171 (VFGI…YMYH).

The protein belongs to the YciB family.

Its subcellular location is the cell inner membrane. Its function is as follows. Plays a role in cell envelope biogenesis, maintenance of cell envelope integrity and membrane homeostasis. In Idiomarina loihiensis (strain ATCC BAA-735 / DSM 15497 / L2-TR), this protein is Inner membrane-spanning protein YciB.